Reading from the N-terminus, the 103-residue chain is ATP-dependent Clp protease adapter protein ClpS (103 aa).

This sequence belongs to the ClpS family. Binds to the N-terminal domain of the chaperone ClpA.

Its function is as follows. Involved in the modulation of the specificity of the ClpAP-mediated ATP-dependent protein degradation. This is ATP-dependent Clp protease adapter protein ClpS from Neisseria meningitidis serogroup A / serotype 4A (strain DSM 15465 / Z2491).